Here is a 493-residue protein sequence, read N- to C-terminus: D-aminoacyl-tRNA deacylase (493 aa).

Residues 22-37 (DLGDWERRDDPSRPDA) show a composition bias toward basic and acidic residues. 2 disordered regions span residues 22–44 (DLGDWERRDDPSRPDADGGGTYY) and 441–493 (PEGP…EPSE).

It belongs to the DtdA deacylase family. In terms of assembly, monomer. Zn(2+) is required as a cofactor.

The catalysed reaction is a D-aminoacyl-tRNA + H2O = a tRNA + a D-alpha-amino acid + H(+). The enzyme catalyses glycyl-tRNA(Ala) + H2O = tRNA(Ala) + glycine + H(+). Its function is as follows. D-aminoacyl-tRNA deacylase with broad substrate specificity. By recycling D-aminoacyl-tRNA to D-amino acids and free tRNA molecules, this enzyme counteracts the toxicity associated with the formation of D-aminoacyl-tRNA entities in vivo. This Halorubrum lacusprofundi (strain ATCC 49239 / DSM 5036 / JCM 8891 / ACAM 34) protein is D-aminoacyl-tRNA deacylase.